Here is a 901-residue protein sequence, read N- to C-terminus: Mediator of RNA polymerase II transcription subunit 14 (901 aa).

This sequence belongs to the Mediator complex subunit 14 family. In terms of assembly, component of the Mediator complex.

The protein resides in the nucleus. Its function is as follows. Component of the Mediator complex, a coactivator involved in the regulated transcription of nearly all RNA polymerase II-dependent genes. Mediator functions as a bridge to convey information from gene-specific regulatory proteins to the basal RNA polymerase II transcription machinery. Mediator is recruited to promoters by direct interactions with regulatory proteins and serves as a scaffold for the assembly of a functional preinitiation complex with RNA polymerase II and the general transcription factors. The polypeptide is Mediator of RNA polymerase II transcription subunit 14 (RGR1) (Yarrowia lipolytica (strain CLIB 122 / E 150) (Yeast)).